The primary structure comprises 72 residues: MAKEDVIEIEGKVVETMPNAMFTVELENGHQILATVSGKIRKNYIRILVGDRVTVEMSPYDLTRGRITYRFK.

The S1-like domain maps to 1 to 72; it reads MAKEDVIEIE…TRGRITYRFK (72 aa).

This sequence belongs to the IF-1 family. Component of the 30S ribosomal translation pre-initiation complex which assembles on the 30S ribosome in the order IF-2 and IF-3, IF-1 and N-formylmethionyl-tRNA(fMet); mRNA recruitment can occur at any time during PIC assembly.

It is found in the cytoplasm. Functionally, one of the essential components for the initiation of protein synthesis. Stabilizes the binding of IF-2 and IF-3 on the 30S subunit to which N-formylmethionyl-tRNA(fMet) subsequently binds. Helps modulate mRNA selection, yielding the 30S pre-initiation complex (PIC). Upon addition of the 50S ribosomal subunit IF-1, IF-2 and IF-3 are released leaving the mature 70S translation initiation complex. The chain is Translation initiation factor IF-1 from Streptococcus agalactiae serotype Ia (strain ATCC 27591 / A909 / CDC SS700).